The primary structure comprises 590 residues: DNA primase (590 aa).

The segment at 37 to 61 (CPFHTEKTPSFIVNPAGAHYHCFGC) adopts a CHC2-type zinc-finger fold. Positions 253-333 (KKVILVEGQA…QMSVFVCKLP (81 aa)) constitute a Toprim domain. Residues glutamate 259, aspartate 304, and aspartate 306 each contribute to the Mg(2+) site.

The protein belongs to the DnaG primase family. Monomer. Interacts with DnaB. Zn(2+) serves as cofactor. The cofactor is Mg(2+).

It carries out the reaction ssDNA + n NTP = ssDNA/pppN(pN)n-1 hybrid + (n-1) diphosphate.. Its function is as follows. RNA polymerase that catalyzes the synthesis of short RNA molecules used as primers for DNA polymerase during DNA replication. The sequence is that of DNA primase from Chlamydia pneumoniae (Chlamydophila pneumoniae).